The following is a 360-amino-acid chain: Inward rectifier potassium channel 13 (360 aa).

At 1-50 the chain is on the cytoplasmic side; sequence MESSNCKVITPLLSQRHRRMVTKDGHSTLQTDGAPRGLVYLRDAWGTLID. The chain crosses the membrane as a helical span at residues 51-77; the sequence is MRWRWVMLVFSASFVLHWLVFAVLWYV. At 78–105 the chain is on the extracellular side; that stretch reads LAEMNGDLELDHDAPPENHTICVKYITS. The segment at residues 106–122 is an intramembrane region (helical; Pore-forming); that stretch reads FTAAFSFSLETQLTIGY. The short motif at 119-124 is the Selectivity filter element; the sequence is TIGYGT. At 123 to 131 the chain is on the extracellular side; the sequence is GTMFPSGDC. The chain crosses the membrane as a helical span at residues 132–157; the sequence is PSAIALLAIQMLLGLMLEAFITGAFV. The Cytoplasmic portion of the chain corresponds to 158–360; that stretch reads AKIARPKNRA…FQISETGLTE (203 aa). Phosphoserine; by PKC is present on S201. Position 287 is a phosphoserine; by PKA (S287).

This sequence belongs to the inward rectifier-type potassium channel (TC 1.A.2.1) family. KCNJ13 subfamily. Homotetramer. Post-translationally, phosphorylation at Ser-201 by PKC strongly inhibits ionic currents, while phosphorylation at Ser-287 by PKA increases them.

It localises to the membrane. It is found in the cell membrane. It catalyses the reaction K(+)(in) = K(+)(out). Inhibited by Ba(2+) and Cs(+), although sensitivity to those inhibitors is much lower than in other Kir channels. Its function is as follows. Inward rectifier potassium channels are characterized by a greater tendency to allow potassium to flow into the cell rather than out of it. Their voltage dependence is regulated by the concentration of extracellular potassium; as external potassium is raised, the voltage range of the channel opening shifts to more positive voltages. The inward rectification is mainly due to the blockage of outward current by internal magnesium. KCNJ13 has a very low single channel conductance, low sensitivity to block by external barium and cesium, and no dependence of its inward rectification properties on the internal blocking particle magnesium. The sequence is that of Inward rectifier potassium channel 13 (KCNJ13) from Cavia porcellus (Guinea pig).